The sequence spans 129 residues: Histone H2A.J (129 aa).

Positions 1–22 (MSGRGKQGGKVRAKAKSRSSRA) are disordered. N6-acetyllysine is present on residues Lys6 and Lys10. Residues 7 to 19 (QGGKVRAKAKSRS) are compositionally biased toward basic residues. Residue Lys10 is modified to N6-lactoyllysine; alternate. Gln105 carries the post-translational modification N5-methylglutamine. Thr121 bears the Phosphothreonine; by DCAF1 mark.

This sequence belongs to the histone H2A family. As to quaternary structure, the nucleosome is a histone octamer containing two molecules each of H2A, H2B, H3 and H4 assembled in one H3-H4 heterotetramer and two H2A-H2B heterodimers. The octamer wraps approximately 147 bp of DNA. Monoubiquitination of Lys-120 (H2AXK119ub) gives a specific tag for epigenetic transcriptional repression. Following DNA double-strand breaks (DSBs), it is ubiquitinated through 'Lys-63' linkage of ubiquitin moieties. Post-translationally, glutamine methylation at Gln-105 (H2AQ104me) by FBL is specifically dedicated to polymerase I. It is present at 35S ribosomal DNA locus and impairs binding of the FACT complex. In terms of processing, phosphorylation on Ser-2 (H2AS1ph) is enhanced during mitosis. Phosphorylation on Ser-2 by RPS6KA5/MSK1 directly represses transcription. Acetylation of H3 inhibits Ser-2 phosphorylation by RPS6KA5/MSK1. Phosphorylation at Thr-121 (H2AT120ph) by DCAF1 is present in the regulatory region of many tumor suppresor genes and down-regulates their transcription.

The protein resides in the nucleus. It is found in the chromosome. Functionally, core component of nucleosome. Nucleosomes wrap and compact DNA into chromatin, limiting DNA accessibility to the cellular machineries which require DNA as a template. Histones thereby play a central role in transcription regulation, DNA repair, DNA replication and chromosomal stability. DNA accessibility is regulated via a complex set of post-translational modifications of histones, also called histone code, and nucleosome remodeling. This is Histone H2A.J from Mus musculus (Mouse).